Reading from the N-terminus, the 104-residue chain is Cytochrome c-552 (104 aa).

Residues 1-23 (MHLHLRGICLVLAVASSSSSALA) form the signal peptide. Heme c contacts are provided by cysteine 37, cysteine 40, histidine 41, and methionine 82.

The protein belongs to the cytochrome c family. Monoheme monomer. Has the tendency to dimerize. Post-translationally, binds 1 heme c group covalently per subunit.

It is found in the periplasm. This chain is Cytochrome c-552 (cycB), found in Bradyrhizobium diazoefficiens (strain JCM 10833 / BCRC 13528 / IAM 13628 / NBRC 14792 / USDA 110).